The sequence spans 130 residues: uncharacterized protein (130 aa).

The disordered stretch occupies residues Met-1–Pro-100. 2 stretches are compositionally biased toward basic and acidic residues: residues Tyr-57–Asp-75 and Ala-91–Pro-100.

This is an uncharacterized protein from Equine herpesvirus 1 (strain Ab4p) (EHV-1).